The primary structure comprises 373 residues: Acyl-CoA dehydrogenase FadE27 (373 aa).

Positions 251, 327, and 331 each coordinate FAD.

Belongs to the acyl-CoA dehydrogenase family. Heterotetramer (dimer of heterodimers) composed of FadE26 and FadE27. FAD is required as a cofactor.

It catalyses the reaction (25S)-3-oxocholest-4-en-26-oyl-CoA + A = 3-oxo-cholest-4,24-dien-26-oyl-CoA + AH2. It participates in steroid metabolism; cholesterol degradation. With respect to regulation, uncompetitively inhibited by high concentration of 3-OCS-CoA. Functionally, involved in the first cycle of side chain dehydrogenation in the beta-oxidation of cholesterol catabolism. It contributes partly to the virulence by increasing the efficiency of beta-oxidation. Catalyzes the dehydrogenation of acyl-CoA ester side chains of (25S)-3-oxo-cholest-4-en-26-oyl-CoA (3-OCS-CoA) to yield (24E)-3-oxo-cholest-4,24-dien-26-oyl-CoA. Also able to dehydrogenate steroyl-CoA such as 3-oxo-chol-4-en-24-oyl-CoA (3-OCO-CoA) as well as 3-oxo-4-pregnene-20-carboxyl-CoA (3-OPC-CoA). It dehydrogenates only (25S)-OCS-CoA diastereomer. The chain is Acyl-CoA dehydrogenase FadE27 (fadE27) from Mycobacterium tuberculosis (strain ATCC 25618 / H37Rv).